The chain runs to 694 residues: Follicle-stimulating hormone receptor (694 aa).

Positions 1–17 (MALLLVSLLAFLSLGSG) are cleaved as a signal peptide. 2 disulfide bridges follow: Cys18–Cys25 and Cys23–Cys32. In terms of domain architecture, LRRNT spans 18–46 (CHHRVCHCSNRVFLCQESKVTEIPSDLPR). Residues 18 to 365 (CHHRVCHCSN…EDIMGYDILR (348 aa)) lie on the Extracellular side of the membrane. LRR repeat units lie at residues 49–72 (LELR…FGDL), 73–97 (EKIE…LPKL), 98–118 (HEIR…AFQN), 119–143 (LPNL…KIQS), 144–169 (LQKV…MGLS), 170–192 (FEST…AFNG), 193–216 (TQLD…VFQG), 217–240 (ASGP…GLEN), and 241–259 (LKKL…PSLE). 2 N-linked (GlcNAc...) asparagine glycosylation sites follow: Asn191 and Asn199. An N-linked (GlcNAc...) asparagine glycan is attached at Asn268. 4 disulfide bridges follow: Cys275–Cys345, Cys276–Cys292, Cys276–Cys355, and Cys292–Cys337. Residue Asn293 is glycosylated (N-linked (GlcNAc...) asparagine). Tyr334 carries the sulfotyrosine modification. The chain crosses the membrane as a helical span at residues 366 to 386 (VLIWFISILAITGNIIVLVIL). The Cytoplasmic portion of the chain corresponds to 387 to 397 (ITSQYKLTVPR). Residues 398–420 (FLMCNLAFADLCIGIYLLLIASV) traverse the membrane as a helical segment. Residues 421–442 (DIHTKSQYHNYAIDWQTGAGCD) lie on the Extracellular side of the membrane. A disulfide bridge links Cys441 with Cys516. A helical transmembrane segment spans residues 443-464 (AAGFFTVFASELSVYTLTAITL). The Cytoplasmic segment spans residues 465–484 (ERWHTITHAMQLECKVQLRH). Residues 485-507 (AASVMLVGWIFAFAVALLPIFGI) traverse the membrane as a helical segment. At 508 to 527 (STYMKVSICLPMDIDSPLSQ) the chain is on the extracellular side. A helical membrane pass occupies residues 528 to 549 (LYVMSLLVLNVLAFVVICGCYI). Residues 550–572 (HIYLTVRNPNIVSSSSDTKIAKR) are Cytoplasmic-facing. The helical transmembrane segment at 573 to 596 (MAILIFTDFLCMAPISFFAISASL) threads the bilayer. Topologically, residues 597 to 607 (KVPLITVSKSK) are extracellular. The helical transmembrane segment at 608-629 (ILLVLFYPINSCANPFLYAIFT) threads the bilayer. Over 630–694 (KNFRRDFFIL…LVPLSHLAQN (65 aa)) the chain is Cytoplasmic.

The protein belongs to the G-protein coupled receptor 1 family. FSH/LSH/TSH subfamily. As to quaternary structure, homotrimer. Functions as a homotrimer binding the FSH hormone heterodimer composed of CGA and FSHB. Interacts with ARRB2. Interacts with APPL2; interaction is independent of follicle stimulating hormone stimulation. In terms of processing, N-glycosylated; indirectly required for FSH-binding, possibly via a conformational change that allows high affinity binding of hormone. Post-translationally, sulfated.

Its subcellular location is the cell membrane. G protein-coupled receptor for follitropin, the follicle-stimulating hormone. Through cAMP production activates the downstream PI3K-AKT and ERK1/ERK2 signaling pathways. The chain is Follicle-stimulating hormone receptor (FSHR) from Equus caballus (Horse).